Here is a 51-residue protein sequence, read N- to C-terminus: Large ribosomal subunit protein eL39 (51 aa).

This sequence belongs to the eukaryotic ribosomal protein eL39 family.

This is Large ribosomal subunit protein eL39 (rpl39e) from Pyrobaculum aerophilum (strain ATCC 51768 / DSM 7523 / JCM 9630 / CIP 104966 / NBRC 100827 / IM2).